The following is a 280-amino-acid chain: Monoacylglycerol lipase (280 aa).

S111 (nucleophile) is an active-site residue. Catalysis depends on charge relay system residues D227 and H257.

Belongs to the AB hydrolase superfamily.

Its subcellular location is the secreted. The protein resides in the cell wall. It carries out the reaction Hydrolyzes glycerol monoesters of long-chain fatty acids.. Contributes to cell growth, probably by hydrolyzing exogenous lipids. Catalyzes the hydrolysis of monoacylglycerols (MAG) with fatty acid chains ranging from C14 to C18, with a maximum activity on monoolein. Is unable to hydrolyze long-chain diacylglycerol (DAG). This is Monoacylglycerol lipase from Mycolicibacterium smegmatis (strain ATCC 700084 / mc(2)155) (Mycobacterium smegmatis).